The chain runs to 435 residues: Serine--tRNA ligase (435 aa).

An L-serine-binding site is contributed by 242 to 244 (TAE). 273 to 275 (RSE) is an ATP binding site. Glutamate 296 contacts L-serine. 360-363 (EISS) provides a ligand contact to ATP. Serine 396 is an L-serine binding site.

This sequence belongs to the class-II aminoacyl-tRNA synthetase family. Type-1 seryl-tRNA synthetase subfamily. As to quaternary structure, homodimer. The tRNA molecule binds across the dimer.

Its subcellular location is the cytoplasm. The catalysed reaction is tRNA(Ser) + L-serine + ATP = L-seryl-tRNA(Ser) + AMP + diphosphate + H(+). It catalyses the reaction tRNA(Sec) + L-serine + ATP = L-seryl-tRNA(Sec) + AMP + diphosphate + H(+). The protein operates within aminoacyl-tRNA biosynthesis; selenocysteinyl-tRNA(Sec) biosynthesis; L-seryl-tRNA(Sec) from L-serine and tRNA(Sec): step 1/1. In terms of biological role, catalyzes the attachment of serine to tRNA(Ser). Is also able to aminoacylate tRNA(Sec) with serine, to form the misacylated tRNA L-seryl-tRNA(Sec), which will be further converted into selenocysteinyl-tRNA(Sec). The chain is Serine--tRNA ligase from Vibrio atlanticus (strain LGP32) (Vibrio splendidus (strain Mel32)).